We begin with the raw amino-acid sequence, 471 residues long: Glutamate--tRNA ligase (471 aa).

A 'HIGH' region motif is present at residues 9 to 19 (PSPTGYLHVGG). C98, C100, C125, and D127 together coordinate Zn(2+). The 'KMSKS' region signature appears at 237–241 (KLSKR). Position 240 (K240) interacts with ATP.

It belongs to the class-I aminoacyl-tRNA synthetase family. Glutamate--tRNA ligase type 1 subfamily. In terms of assembly, monomer. Requires Zn(2+) as cofactor.

Its subcellular location is the cytoplasm. The catalysed reaction is tRNA(Glu) + L-glutamate + ATP = L-glutamyl-tRNA(Glu) + AMP + diphosphate. Catalyzes the attachment of glutamate to tRNA(Glu) in a two-step reaction: glutamate is first activated by ATP to form Glu-AMP and then transferred to the acceptor end of tRNA(Glu). This is Glutamate--tRNA ligase from Yersinia pseudotuberculosis serotype O:1b (strain IP 31758).